The following is a 152-amino-acid chain: Perlwapin (152 aa).

The first 18 residues, 1 to 18 (LILCVVVCTAAVLGTAAG), serve as a signal peptide directing secretion. One can recognise a WAP 1 domain in the interval 19–61 (YESQLPGCPPGAYPAICARYCYSDRDCASGYYCCNTGCLNICV). 12 disulfides stabilise this stretch: Cys-26/Cys-52, Cys-35/Cys-56, Cys-39/Cys-51, Cys-45/Cys-60, Cys-69/Cys-95, Cys-77/Cys-100, Cys-82/Cys-94, Cys-88/Cys-103, Cys-112/Cys-139, Cys-122/Cys-142, Cys-126/Cys-138, and Cys-132/Cys-146. In terms of domain architecture, WAP 2; atypical spans 62 to 107 (PKPKPGLCPSITQSPCRGNVCNNDQDCPGNRKCCGKPGCKRCYRPK). Residues 108 to 150 (KPGSCPARKYEAGPCVVYCDGDFDCPGDKKCCGGCPRLCEKPC) enclose the WAP 3 domain.

As to expression, component of the acid-soluble and acid-insoluble organic matrix of prismatic shell layers (at protein level).

The protein resides in the secreted. Inhibits growth of calcium carbonate crystals. May inhibit growth of certain crystallographic planes in the mineral phase of nacre in the shell. The polypeptide is Perlwapin (Haliotis asinina (Donkey's ear abalone)).